A 560-amino-acid polypeptide reads, in one-letter code: Platelet glycoprotein V (560 aa).

The first 16 residues, 1-16, serve as a signal peptide directing secretion; sequence MLRGTLLCAVLGLLRA. Residues 17 to 50 form the LRRNT domain; sequence QPFPCPPACKCVFRDAAQCSGGDVARISALGLPT. At 17-523 the chain is on the extracellular side; the sequence is QPFPCPPACK…KGQDHSPFWG (507 aa). N-linked (GlcNAc...) asparagine glycosylation occurs at Asn-51. 13 LRR repeats span residues 75-96, 99-120, 123-144, 147-168, 171-193, 195-216, 219-240, 243-264, 267-288, 291-312, 340-361, 364-385, and 388-409; these read VLQR…TFSD, KLKT…LLDK, LLEQ…MFQK, NLQE…LFTN, NLKL…LGAQ, KLER…LLNS, ALTE…AFDR, NLSS…LFLH, NLTL…LFGE, GLQE…AFRN, ELQV…LLRG, KLRQ…LFRN, and SLES…VFGA. Asn-181 is a glycosylation site (N-linked (GlcNAc...) (complex) asparagine). N-linked (GlcNAc...) (complex) asparagine glycosylation occurs at Asn-243. 3 N-linked (GlcNAc...) asparagine glycosylation sites follow: Asn-267, Asn-298, and Asn-312. Asn-385 is a glycosylation site (N-linked (GlcNAc...) asparagine). The LRRCT domain maps to 421 to 474; that stretch reads NSWRCDCGLGPFLGWLRQHLGLVGGEEPPRCAGPGAHAGLPLWALPGGDAECPG. The tract at residues 469-498 is disordered; that stretch reads DAECPGPRGPPPRPAADSSSEAPVHPALAP. Residue Asn-499 is glycosylated (N-linked (GlcNAc...) asparagine). A helical transmembrane segment spans residues 524 to 544; the sequence is FYFLLLAVQAMITVIIVFAMI. Residues 545-560 lie on the Cytoplasmic side of the membrane; the sequence is KIGQLFRKLIRERALG.

In terms of processing, the N-terminus is blocked. As to expression, platelets and megakaryocytes.

The protein resides in the membrane. In terms of biological role, the GPIb-V-IX complex functions as the vWF receptor and mediates vWF-dependent platelet adhesion to blood vessels. The adhesion of platelets to injured vascular surfaces in the arterial circulation is a critical initiating event in hemostasis. The protein is Platelet glycoprotein V (GP5) of Homo sapiens (Human).